A 409-amino-acid chain; its full sequence is NADH-quinone oxidoreductase subunit 4 (409 aa).

It belongs to the complex I 49 kDa subunit family. As to quaternary structure, NDH-1 is composed of 15 different subunits, Nqo1 to Nqo15. The complex has a L-shaped structure, with the hydrophobic arm (subunits Nqo7, Nqo8 and Nqo10 to Nqo14) embedded in the membrane and the hydrophilic peripheral arm (subunits Nqo1 to Nqo6, Nqo9 and Nqo15) protruding into the bacterial cytoplasm. The hydrophilic domain contains all the redox centers. This subunit interacts extensively with Nqo6.

Its subcellular location is the cell membrane. The enzyme catalyses a quinone + NADH + 5 H(+)(in) = a quinol + NAD(+) + 4 H(+)(out). Its function is as follows. NDH-1 shuttles electrons from NADH, via FMN and iron-sulfur (Fe-S) centers, to quinones in the respiratory chain. The immediate electron acceptor for the enzyme in this species is menaquinone. Couples the redox reaction to proton translocation (for every two electrons transferred, four hydrogen ions are translocated across the cytoplasmic membrane), and thus conserves the redox energy in a proton gradient required for the synthesis of ATP. The Nqo4 subunit may contain the quinone-binding site. The polypeptide is NADH-quinone oxidoreductase subunit 4 (nqo4) (Thermus thermophilus (strain ATCC 27634 / DSM 579 / HB8)).